Here is a 308-residue protein sequence, read N- to C-terminus: Ribosomal RNA small subunit methyltransferase H (308 aa).

S-adenosyl-L-methionine is bound by residues 36 to 38 (GGH), D55, F82, D103, and Q110.

This sequence belongs to the methyltransferase superfamily. RsmH family.

The protein resides in the cytoplasm. The catalysed reaction is cytidine(1402) in 16S rRNA + S-adenosyl-L-methionine = N(4)-methylcytidine(1402) in 16S rRNA + S-adenosyl-L-homocysteine + H(+). Functionally, specifically methylates the N4 position of cytidine in position 1402 (C1402) of 16S rRNA. The sequence is that of Ribosomal RNA small subunit methyltransferase H from Helicobacter pylori (strain ATCC 700392 / 26695) (Campylobacter pylori).